Reading from the N-terminus, the 452-residue chain is Packaging protein 1 (452 aa).

The interval 1–78 (MLPCRSTGRR…AKPPQRGSLL (78 aa)) is disordered. 173–180 (GPTGCGKS) contacts ATP. A DNA-binding region spans residues 442 to 452 (RAYHVRKNKYQ).

This sequence belongs to the adenoviridae packaging protein 1 family. In terms of assembly, homodimer. Part of a genome packaging complex composed of packaging proteins 1, 2 and 3; this complex specifically binds to the packaging sequence on the left end of viral genomic DNA and performs packaging of the viral genome. Interacts with protein 33K.

The protein resides in the virion. Its subcellular location is the host nucleus. It localises to the host nucleoplasm. The protein localises to the host nucleolus. Functionally, component of the packaging machinery which encapsidates the viral DNA into preformed capsids and transcriptional activator of the viral major late promoter (MLP). Binds, along with packaging proteins 2 and 3, to the specific packaging sequence on the left end of viral genomic DNA and displays ATPase activity thereby providing the power stroke of the packaging machinery. The activity of packaging protein IVa2 is stimulated by protein 33K which acts as a terminase. May be the protein that pumps DNA into the capsid powered by ATP hydrolysis. Specifically binds to the 5'-CG-3' nucleotides of the repeats making up the packaging sequence. Component of the DEF-A and DEF-B transcription factors that bind downstream elements of the major late promoter (MLP), and stimulate transcription from the MLP after initiation of viral DNA replication. DEF-A is a heterodimer packaging proteins 1 and 2 and DEF-B is a homodimer of packaging protein 1. This chain is Packaging protein 1, found in Homo sapiens (Human).